The chain runs to 306 residues: Ornithine carbamoyltransferase (306 aa).

Residues 54-57, Q81, R105, and 132-135 each bind carbamoyl phosphate; these read STRT and HPLQ. L-ornithine-binding positions include N162, D226, and 230–231; that span reads SM. Carbamoyl phosphate is bound by residues 266–267 and R294; that span reads CL.

The protein belongs to the aspartate/ornithine carbamoyltransferase superfamily. OTCase family.

The protein resides in the cytoplasm. The catalysed reaction is carbamoyl phosphate + L-ornithine = L-citrulline + phosphate + H(+). It participates in amino-acid biosynthesis; L-arginine biosynthesis; L-arginine from L-ornithine and carbamoyl phosphate: step 1/3. Reversibly catalyzes the transfer of the carbamoyl group from carbamoyl phosphate (CP) to the N(epsilon) atom of ornithine (ORN) to produce L-citrulline. The polypeptide is Ornithine carbamoyltransferase (Sulfolobus acidocaldarius (strain ATCC 33909 / DSM 639 / JCM 8929 / NBRC 15157 / NCIMB 11770)).